Reading from the N-terminus, the 921-residue chain is Isoleucine--tRNA ligase (921 aa).

The short motif at 57 to 67 (PYANGELHMGH) is the 'HIGH' region element. An L-isoleucyl-5'-AMP-binding site is contributed by E552. A 'KMSKS' region motif is present at residues 593–597 (KMSKS). K596 is an ATP binding site. Residues C888, C891, C908, and C911 each coordinate Zn(2+).

This sequence belongs to the class-I aminoacyl-tRNA synthetase family. IleS type 1 subfamily. Monomer. Requires Zn(2+) as cofactor.

It localises to the cytoplasm. The catalysed reaction is tRNA(Ile) + L-isoleucine + ATP = L-isoleucyl-tRNA(Ile) + AMP + diphosphate. Functionally, catalyzes the attachment of isoleucine to tRNA(Ile). As IleRS can inadvertently accommodate and process structurally similar amino acids such as valine, to avoid such errors it has two additional distinct tRNA(Ile)-dependent editing activities. One activity is designated as 'pretransfer' editing and involves the hydrolysis of activated Val-AMP. The other activity is designated 'posttransfer' editing and involves deacylation of mischarged Val-tRNA(Ile). The polypeptide is Isoleucine--tRNA ligase (Listeria monocytogenes serotype 4b (strain F2365)).